Consider the following 72-residue polypeptide: Alpha-elapitoxin-Dv2b (72 aa).

Disulfide bonds link Cys-3–Cys-21, Cys-14–Cys-42, Cys-27–Cys-31, Cys-46–Cys-57, and Cys-58–Cys-63.

This sequence belongs to the three-finger toxin family. Long-chain subfamily. Type II alpha-neurotoxin sub-subfamily. In terms of processing, neurotoxin 4.7.3 differs from 4.9.3 only in that Trp-26 has undergone partial photooxidation. In terms of tissue distribution, expressed by the venom gland.

Its subcellular location is the secreted. Binds with high affinity to muscular (alpha-1/CHRNA1) and neuronal (alpha-7/CHRNA7) nicotinic acetylcholine receptor (nAChR) and inhibits acetylcholine from binding to the receptor, thereby impairing neuromuscular and neuronal transmission. This chain is Alpha-elapitoxin-Dv2b, found in Dendroaspis viridis (Western green mamba).